The chain runs to 606 residues: MSHTASSCQELVENCAVHVAGMAQEDSRRGQVPSSFYHGANQELDLSTKVYKRESGSPYSVLVDTKMSKPHLHETEEQPYFRETRAVSDVHAVKEDRENSDDTEEEEEEVSYKREQIIVEVNLNNQTLNVSKGEKGVSSQSKETPVLKTSSEEEEEESEEEATDDSNDYGENEKQKKKEKIVEKVSVTQRRTRRAASVAAATTSPTPRTTRGRRKSVEPPKRKKRATKEPKAPVQKAKCEEKETLTCEKCPRVFNTRWYLEKHMNVTHRRMQICDKCGKKFVLESELSLHQQTDCEKNIQCVSCNKSFKKLWSLHEHIKIVHGYAEKKFSCEICEKKFYTMAHVRKHMVAHTKDMPFTCETCGKSFKRSMSLKVHSLQHSGEKPFRCENCDERFQYKYQLRSHMSIHIGHKQFMCQWCGKDFNMKQYFDEHMKTHTGEKPFICEICGKSFTSRPNMKRHRRTHTGEKPYPCDVCGQRFRFSNMLKAHKEKCFRVTSPVNVPPAVQIPLTTSPATPVPSVVNTATTPTPPINMNPVSTLPPRPIPHPFSHLHIHPHPHHPHHLPIPPVPHLPPPPALFKSEPLNHRGQSEDNFLRHLAEKNSSAQHH.

Position 57 is a phosphoserine (Ser-57). Residues 71–97 (HLHETEEQPYFRETRAVSDVHAVKEDR) show a composition bias toward basic and acidic residues. Disordered regions lie at residues 71–113 (HLHE…VSYK) and 130–235 (VSKG…APVQ). The segment covering 98–109 (ENSDDTEEEEEE) has biased composition (acidic residues). Ser-100 bears the Phosphoserine mark. A Phosphothreonine modification is found at Thr-103. The segment covering 137 to 149 (VSSQSKETPVLKT) has biased composition (polar residues). The span at 152-170 (EEEEEESEEEATDDSNDYG) shows a compositional bias: acidic residues. The span at 171–183 (ENEKQKKKEKIVE) shows a compositional bias: basic and acidic residues. Low complexity predominate over residues 184–209 (KVSVTQRRTRRAASVAAATTSPTPRT). Phosphoserine occurs at positions 197 and 204. The segment at 245 to 268 (LTCEKCPRVFNTRWYLEKHMNVTH) adopts a C2H2-type 1 zinc-finger fold. The segment at 272 to 294 (QICDKCGKKFVLESELSLHQQTD) adopts a C2H2-type 2; degenerate zinc-finger fold. 6 consecutive C2H2-type zinc fingers follow at residues 299–322 (IQCV…KIVH), 329–351 (FSCE…MVAH), 357–379 (FTCE…SLQH), 385–407 (FRCE…MSIH), 413–435 (FMCQ…MKTH), and 441–463 (FICE…RRTH). The C2H2-type 9; degenerate zinc finger occupies 469–492 (YPCDVCGQRFRFSNMLKAHKEKCF). A mediates interaction with CBFA2T3 region spans residues 498–606 (VNVPPAVQIP…AEKNSSAQHH (109 aa)).

It belongs to the krueppel C2H2-type zinc-finger protein family. Interacts with CBFA2T3. Widely expressed with higher expression in breast, prostate, vulva and pancreas.

It localises to the nucleus. Functionally, functions as a transcriptional repressor. The polypeptide is Zinc finger protein 652 (ZNF652) (Homo sapiens (Human)).